Here is a 216-residue protein sequence, read N- to C-terminus: uncharacterized protein (216 aa).

The S-adenosyl-L-methionine site is built by Gly56 and Glu77.

Belongs to the methyltransferase superfamily. YrrT family.

In terms of biological role, could be a S-adenosyl-L-methionine-dependent methyltransferase. This is an uncharacterized protein from Alkaliphilus oremlandii (strain OhILAs) (Clostridium oremlandii (strain OhILAs)).